The chain runs to 63 residues: Alpha-conotoxin-like PuSG1.1 (63 aa).

A signal peptide spans 1–21; it reads MRCLAFLVVTLLLFTATATTG. A propeptide spanning residues 22 to 43 is cleaved from the precursor; it reads ASNGMNAAASGEAPDSISLAVR. Disulfide bonds link Cys-46-Cys-52 and Cys-47-Cys-60. The interval 48–50 is lacks the Ser-Xaa-Pro motif that is crucial for potent interaction with nAChR; sequence PDP.

It belongs to the conotoxin A superfamily. Expressed by the salivary gland.

The protein resides in the secreted. Alpha-conopeptides-like may act on postsynaptic membranes, they bind to the nicotinic acetylcholine receptors (nAChR) and thus inhibit them. Has possibly a distinct nAChR binding mode from other alpha-conotoxins, due to a different three residue motif (lacks the Ser-Xaa-Pro motif). The polypeptide is Alpha-conotoxin-like PuSG1.1 (Conus pulicarius (Flea-bitten cone)).